The sequence spans 291 residues: Small ribosomal subunit biogenesis GTPase RsgA (291 aa).

In terms of domain architecture, CP-type G spans 63 to 221 (KNELKRPPVS…IADTPGFSAL (159 aa)). GTP is bound by residues 112 to 115 (TKKD) and 164 to 172 (GQSGVGKST). Zn(2+) is bound by residues cysteine 245, cysteine 250, histidine 252, and cysteine 258.

The protein belongs to the TRAFAC class YlqF/YawG GTPase family. RsgA subfamily. As to quaternary structure, monomer. Associates with 30S ribosomal subunit, binds 16S rRNA. Requires Zn(2+) as cofactor.

Its subcellular location is the cytoplasm. Functionally, one of several proteins that assist in the late maturation steps of the functional core of the 30S ribosomal subunit. Helps release RbfA from mature subunits. May play a role in the assembly of ribosomal proteins into the subunit. Circularly permuted GTPase that catalyzes slow GTP hydrolysis, GTPase activity is stimulated by the 30S ribosomal subunit. This chain is Small ribosomal subunit biogenesis GTPase RsgA, found in Staphylococcus aureus (strain MRSA252).